We begin with the raw amino-acid sequence, 75 residues long: Large ribosomal subunit protein bL31c (75 aa).

It belongs to the bacterial ribosomal protein bL31 family. Type A subfamily. In terms of assembly, part of the 50S ribosomal subunit.

The protein resides in the plastid. The protein localises to the chloroplast. Functionally, binds the 23S rRNA. The polypeptide is Large ribosomal subunit protein bL31c (Cyanidium caldarium (Red alga)).